The sequence spans 1320 residues: Transcriptional activator MN1 (1320 aa).

Methionine 1 carries the post-translational modification N-acetylmethionine. 9 disordered regions span residues 1–26 (MFGLDQFEPQVNSRNAGQGERNFNET), 92–121 (FGGQQPHHGHPGSHHPHQHHPHFGGNFGGP), 147–219 (PPFA…SLEP), 231–411 (LEYN…EYPI), 423–442 (SEPVFSMQHPPPQQAPNQRL), 474–615 (NGSM…AGRL), 629–819 (SAWF…KDNL), 840–1150 (GAPN…PDEI), and 1247–1273 (PWEKAKPQNPNSKEAHDLPANKASASQ). The span at 98 to 113 (HHGHPGSHHPHQHHPH) shows a compositional bias: basic residues. Composition is skewed to low complexity over residues 202 to 214 (SFHGLPSSSGSDS) and 291 to 309 (QPPQQQPQQQQQPQQQQQQ). The segment covering 338-366 (MQPPQQAPPPPQQQPPQQPPQQQPPPPPG) has biased composition (pro residues). The span at 498 to 514 (FTPPVPDSFPSGPPLQH) shows a compositional bias: pro residues. Low complexity-rich tracts occupy residues 523 to 550 (QQQQQQQQQQQQQQQQQQQQQQQQQQQQ) and 564 to 578 (RNQQQRLRQPNLAQL). Gly residues-rich tracts occupy residues 582-596 (GDVGQGGLVHGGPVG) and 701-710 (QFGGSLGGLG). A compositionally biased stretch (low complexity) spans 759–768 (SGPGVNSPPS). The segment covering 769-784 (AGGGGGSSGGGGGGGA) has biased composition (gly residues). 2 stretches are compositionally biased toward low complexity: residues 798–809 (SASKLGALSLGS) and 895–905 (GTSSSGSKASG). Polar residues predominate over residues 914-930 (DGTSLSPNYTLESTSGN). A phosphoserine mark is found at serine 950 and serine 954. Over residues 973 to 984 (GVSPGQQQASGA) the composition is skewed to low complexity. The residue at position 1007 (serine 1007) is a Phosphoserine. The segment covering 1048–1066 (EVSTSYANEDEVSSSSDNP) has biased composition (polar residues). The residue at position 1081 (serine 1081) is a Phosphoserine. The segment covering 1118 to 1128 (YGGGGGPGHPG) has biased composition (gly residues).

In terms of assembly, interacts with PBX1, PKNOX1, ZBTB24, E2F7, RING1. Widely expressed in fetal and adult tissues. Highest expression is observed in fetal brain and skeletal muscle, and adult skeletal muscle.

It localises to the nucleus. Functionally, transcriptional activator which specifically regulates expression of TBX22 in the posterior region of the developing palate. Required during later stages of palate development for growth and medial fusion of the palatal shelves. Promotes maturation and normal function of calvarial osteoblasts, including expression of the osteoclastogenic cytokine TNFSF11/RANKL. Necessary for normal development of the membranous bones of the skull. May play a role in tumor suppression. The protein is Transcriptional activator MN1 (MN1) of Homo sapiens (Human).